The chain runs to 510 residues: Guanosine import ATP-binding protein NupO (510 aa).

2 consecutive ABC transporter domains span residues 5–240 (IEML…VGRE) and 257–501 (LAID…AGST). 37–44 (GENGAGKS) contributes to the ATP binding site.

It belongs to the ABC transporter superfamily. The complex is composed of two ATP-binding proteins (NupO), two transmembrane proteins (NupP and NupQ) and a solute-binding protein (NupN).

It is found in the cell membrane. Functionally, part of an ABC transporter complex involved in the uptake of guanosine. Responsible for energy coupling to the transport system. May be a nucleoside transporter of broad specificity but with various affinities for different substrates. The chain is Guanosine import ATP-binding protein NupO from Bacillus subtilis (strain 168).